Reading from the N-terminus, the 183-residue chain is Photosystem I assembly protein Ycf4 (183 aa).

A run of 2 helical transmembrane segments spans residues 17-39 and 59-81; these read NYLL…FLSY and FIPQ…IYIY.

The protein belongs to the Ycf4 family.

The protein resides in the plastid. Its subcellular location is the chloroplast thylakoid membrane. Its function is as follows. Seems to be required for the assembly of the photosystem I complex. The polypeptide is Photosystem I assembly protein Ycf4 (Cyanidium caldarium (Red alga)).